Here is a 118-residue protein sequence, read N- to C-terminus: Holo-[acyl-carrier-protein] synthase (118 aa).

Residues Asp8 and Glu58 each coordinate Mg(2+).

This sequence belongs to the P-Pant transferase superfamily. AcpS family. Mg(2+) serves as cofactor.

The protein localises to the cytoplasm. It catalyses the reaction apo-[ACP] + CoA = holo-[ACP] + adenosine 3',5'-bisphosphate + H(+). Transfers the 4'-phosphopantetheine moiety from coenzyme A to a Ser of acyl-carrier-protein. This is Holo-[acyl-carrier-protein] synthase from Listeria monocytogenes serotype 4b (strain CLIP80459).